Here is a 141-residue protein sequence, read N- to C-terminus: Hemoglobin subunit alpha (141 aa).

One can recognise a Globin domain in the interval 1–141 (VLSATDKANV…VATVLTSKYR (141 aa)). Position 3 is a phosphoserine (Ser-3). N6-succinyllysine occurs at positions 7 and 11. Lys-16 bears the N6-acetyllysine; alternate mark. Lys-16 carries the post-translational modification N6-succinyllysine; alternate. A Phosphotyrosine modification is found at Tyr-24. N6-succinyllysine is present on Lys-40. O2 is bound at residue His-58. His-87 lines the heme b pocket. Residue Ser-102 is modified to Phosphoserine. A Phosphothreonine modification is found at Thr-108. Ser-124 is modified (phosphoserine). Residues Thr-134 and Thr-137 each carry the phosphothreonine modification. Ser-138 bears the Phosphoserine mark.

This sequence belongs to the globin family. As to quaternary structure, heterotetramer of two alpha chains and two beta chains. As to expression, red blood cells.

Functionally, involved in oxygen transport from the lung to the various peripheral tissues. Its function is as follows. Hemopressin acts as an antagonist peptide of the cannabinoid receptor CNR1. Hemopressin-binding efficiently blocks cannabinoid receptor CNR1 and subsequent signaling. The chain is Hemoglobin subunit alpha (HBA) from Erinaceus europaeus (Western European hedgehog).